Consider the following 1125-residue polypeptide: Exportin-6 (1125 aa).

Ala2 is modified (N-acetylalanine). The Importin N-terminal domain maps to 31–97 (IEELLNNFAQ…RSCLPKLLLA (67 aa)). Ser199 bears the Phosphoserine mark. A phosphothreonine mark is found at Thr201 and Thr204. Phosphoserine is present on residues Ser208 and Ser224.

Belongs to the exportin family. As to quaternary structure, found in a complex with XPO6, Ran, ACTB and PFN1. Interacts with ACTB. Interacts with ACTB in a RanGTP-dependent manner.

The protein localises to the nucleus. It localises to the cytoplasm. Its function is as follows. Mediates the nuclear export of actin and profilin-actin complexes in somatic cells. The polypeptide is Exportin-6 (Xpo6) (Mus musculus (Mouse)).